We begin with the raw amino-acid sequence, 237 residues long: Uridylate kinase (237 aa).

An ATP-binding site is contributed by 12–15 (KLSG). The tract at residues 20 to 25 (GDEGFG) is involved in allosteric activation by GTP. Gly-54 serves as a coordination point for UMP. ATP contacts are provided by Gly-55 and Arg-59. Residues Asp-74 and 135 to 142 (TGSPFFTT) each bind UMP. ATP-binding residues include Thr-162, Tyr-168, and Asp-171.

Belongs to the UMP kinase family. Homohexamer.

It localises to the cytoplasm. The catalysed reaction is UMP + ATP = UDP + ADP. It functions in the pathway pyrimidine metabolism; CTP biosynthesis via de novo pathway; UDP from UMP (UMPK route): step 1/1. Its activity is regulated as follows. Allosterically activated by GTP. Inhibited by UTP. Its function is as follows. Catalyzes the reversible phosphorylation of UMP to UDP. This chain is Uridylate kinase, found in Actinobacillus pleuropneumoniae serotype 5b (strain L20).